Reading from the N-terminus, the 491-residue chain is Immediate early protein IE1 (491 aa).

The segment covering 1–11 has biased composition (basic and acidic residues); that stretch reads MESSAKRKMDP. The interval 1-24 is nuclear localization signal; it reads MESSAKRKMDPDNPDEGPSSKVPR. Positions 1 to 30 are disordered; sequence MESSAKRKMDPDNPDEGPSSKVPRPETPVT. Residues 132 to 346 are interaction with host PML, interference with PML sumoylation and disruption of PML-associated nuclear bodies; sequence ILDKVHEPFE…SVMKRRIEEI (215 aa). Residues 373–445 form an interaction with host STAT2 region; sequence AIAEESDEEE…EEGAQEERED (73 aa). Residues 410–420 form a modulation of STAT3/STAT1 signaling region; it reads ATIPLSSVIVA. The interval 410–445 is interaction with host STAT3; it reads ATIPLSSVIVAENSDQEESEQSDEEEEEGAQEERED. The tract at residues 421–472 is acidic; the sequence is ENSDQEESEQSDEEEEEGAQEEREDTVSVKSEPVSEIEEVAPEEEEDGAEEP. The segment at 421-491 is disordered; that stretch reads ENSDQEESEQ…PMVTRSKADQ (71 aa). The span at 423-444 shows a compositional bias: acidic residues; sequence SDQEESEQSDEEEEEGAQEERE. The segment at 449–452 is interaction with host SUMO1; the sequence is VKSE. Lysine 450 participates in a covalent cross-link: Glycyl lysine isopeptide (Lys-Gly) (interchain with G-Cter in SUMO). The segment covering 455 to 470 has biased composition (acidic residues); that stretch reads SEIEEVAPEEEEDGAE. The tract at residues 475–491 is chromosome-tethering domain (CTD), binding to histones; the sequence is SGGKSTHPMVTRSKADQ.

It belongs to the HHV-5 IE1 protein family. In terms of assembly, forms homodimers. Interacts with human p53/TP53; this interaction inhibits p53/TP53-dependent transactivation activity. Interacts with host STAT1. Interacts with host STAT2; this interaction promotes viral growth and counteracts the antiviral interferon response. May also interact with the host STAT1-STAT2 heterodimer. Interacts with host STAT3; this interaction leads to STAT3 nuclear accumulation and disruption of IL6-induced STAT3 phosphorylation. Interacts with host PML; this interaction inhibits host PML de novo sumoylation and probably inhibits PML regulation of type I and type II interferon-induced gene expression. Interacts with host DAXX. Interacts with host SP100. Interacts with host E2F1. Interacts with host RB1. Interacts with host HDAC1; this interaction inhibits histone deacetylation and promotes viral transcription. Interacts with host HDAC2; this interaction inhibits histone deacetylation and promotes viral transcription. Interacts with host HDAC3; this interaction inhibits histone deacetylation and promotes viral transcription. Interacts with host PLSCR1; this interaction inhibits IE1 transactivating activity. In terms of processing, sumoylated by host PML/nuclear domain 10. Sumoylation abolishes the interaction with host STAT2 and thus the IE1-mediated repression of interferon-stimulated genes.

The protein resides in the host nucleus. In terms of biological role, plays an important role in transactivating viral early genes as well as activating its own promoter, probably by altering the viral chromatin structure. Expression of IE1 and IE2 proteins is critical for the establishment of lytic infection and reactivation from viral latency. Disrupts PML-associated ND10 nuclear bodies by interfering with host PML and SP100 sumoylation thereby altering the regulation of type I and type II interferon-induced gene expression. Promotes efficient viral growth by interacting with and directing host SP100 to degradation, leading to enhanced acetylation level of histones. In addition, functions in counteracting the host innate antiviral response. Inhibits the type I interferon pathway by directly interacting with and sequestrating host STAT2. Also targets type II interferon pathway by repressing IL6- and STAT3 target genes. Repression of STAT3 genes is due to STAT3 nuclear accumulation and disruption of IL6-induced STAT3 phosphorylation by IE1. This repression is followed by phosphorylation and activation of STAT1. Inhibits host ISG transcription by sequestering host ISGF3 in a PML- and STAT2- binding dependent manner. Alters host cell cycle progression, probably through its interaction with host E2F1 or RB1 that overcomes the RB1-mediated repression of E2F-responsive promoters. May act as a E3 ubiquitin ligase targeting several host proteins including HES1 and SP100A for ubiquitination and subsequent proteasomal degradation. Impairs the radial migration of immature neurons by downregulating Gap junction alpha-1 protein/GJA1 also via ubiquitination and degradation. The polypeptide is Immediate early protein IE1 (UL123) (Human cytomegalovirus (strain Towne) (HHV-5)).